The sequence spans 741 residues: Penicillin-binding protein 1B (741 aa).

The Cytoplasmic segment spans residues 1 to 12 (MYPVNLKLSIKF). A helical; Signal-anchor for type II membrane protein membrane pass occupies residues 13–33 (LFYFFLYFLLIIIIYGVYLYF). Residues 34 to 741 (KINQVIHGKI…WIRNHNIFCT (708 aa)) lie on the Extracellular side of the membrane. Positions 139 to 311 (LRLDPQLIAM…SLYNPWNNPV (173 aa)) are transglycosylase. E177 acts as the Proton donor; for transglycosylase activity in catalysis. Positions 395–687 (ENAIRHGIQQ…STGAMKIYHN (293 aa)) are transpeptidase. S454 serves as the catalytic Acyl-ester intermediate; for transpeptidase activity.

The protein in the N-terminal section; belongs to the glycosyltransferase 51 family. It in the C-terminal section; belongs to the transpeptidase family.

The protein resides in the cell membrane. The enzyme catalyses [GlcNAc-(1-&gt;4)-Mur2Ac(oyl-L-Ala-gamma-D-Glu-L-Lys-D-Ala-D-Ala)](n)-di-trans,octa-cis-undecaprenyl diphosphate + beta-D-GlcNAc-(1-&gt;4)-Mur2Ac(oyl-L-Ala-gamma-D-Glu-L-Lys-D-Ala-D-Ala)-di-trans,octa-cis-undecaprenyl diphosphate = [GlcNAc-(1-&gt;4)-Mur2Ac(oyl-L-Ala-gamma-D-Glu-L-Lys-D-Ala-D-Ala)](n+1)-di-trans,octa-cis-undecaprenyl diphosphate + di-trans,octa-cis-undecaprenyl diphosphate + H(+). It carries out the reaction Preferential cleavage: (Ac)2-L-Lys-D-Ala-|-D-Ala. Also transpeptidation of peptidyl-alanyl moieties that are N-acyl substituents of D-alanine.. Its pathway is cell wall biogenesis; peptidoglycan biosynthesis. In terms of biological role, cell wall formation. Synthesis of cross-linked peptidoglycan from the lipid intermediates. The enzyme has a penicillin-insensitive transglycosylase N-terminal domain (formation of linear glycan strands) and a penicillin-sensitive transpeptidase C-terminal domain (cross-linking of the peptide subunits). The protein is Penicillin-binding protein 1B (mrcB) of Buchnera aphidicola subsp. Baizongia pistaciae (strain Bp).